A 442-amino-acid polypeptide reads, in one-letter code: UDP-N-acetylmuramoylalanine--D-glutamate ligase (442 aa).

109 to 115 (GSNGKTT) provides a ligand contact to ATP.

The protein belongs to the MurCDEF family.

It is found in the cytoplasm. The catalysed reaction is UDP-N-acetyl-alpha-D-muramoyl-L-alanine + D-glutamate + ATP = UDP-N-acetyl-alpha-D-muramoyl-L-alanyl-D-glutamate + ADP + phosphate + H(+). Its pathway is cell wall biogenesis; peptidoglycan biosynthesis. Its function is as follows. Cell wall formation. Catalyzes the addition of glutamate to the nucleotide precursor UDP-N-acetylmuramoyl-L-alanine (UMA). The polypeptide is UDP-N-acetylmuramoylalanine--D-glutamate ligase (Solibacter usitatus (strain Ellin6076)).